Here is a 1195-residue protein sequence, read N- to C-terminus: Voltage-gated inwardly rectifying potassium channel KCNH7 (1195 aa).

Over 1–412 the chain is Cytoplasmic; it reads MPVRRGHVAP…YSPFKAVWDW (412 aa). The 30-residue stretch at 41-70 folds into the PAS domain; sequence IIYCNDGFCEMTGFSRPDVMQKPCTCDFLH. Residues 92-144 enclose the PAC domain; sequence RKVEVTYYHKNGSTFICNTHIIPVKNQEGVAMMFIINFEYVTDEENAATPERV. Position 174 is a phosphoserine (Ser-174). Residues 194-216 form a disordered region; sequence SVAMKHFKSPTKESCSPSEADDT. Phosphoserine occurs at positions 238 and 319. The helical transmembrane segment at 413 to 433 threads the bilayer; the sequence is LILLLVIYTAIFTPYSAAFLL. Residues 434 to 449 are Extracellular-facing; sequence NDREEQKRRECGYSCS. Residues 450 to 470 form a helical membrane-spanning segment; that stretch reads PLNVVDLIVDIMFIIDILINF. Residues 471-494 are Cytoplasmic-facing; it reads RTTYVNQNEEVVSDPAKIAIHYFK. The helical transmembrane segment at 495-515 threads the bilayer; it reads GWFLIDMVAAIPFDLLIFGSG. Over 516–521 the chain is Extracellular; the sequence is SDETTT. Residues 522–542 traverse the membrane as a helical; Voltage-sensor segment; sequence LIGLLKTARLLRLVRVARKLD. Residues 543–549 are Cytoplasmic-facing; sequence RYSEYGA. A helical membrane pass occupies residues 550-570; sequence AVLMLLMCIFALIAHWLACIW. Over 571 to 614 the chain is Extracellular; that stretch reads YAIGNVERPYLTDKIGWLDSLGTQIGKRYNDSDSSSGPSIKDKY. Residue Asn-600 is glycosylated (N-linked (GlcNAc...) asparagine). Positions 615–635 form an intramembrane region, pore-forming; it reads VTALYFTFSSLTSVGFGNVSP. The Selectivity filter signature appears at 627–632; it reads SVGFGN. The Extracellular portion of the chain corresponds to 636–641; that stretch reads NTNSEK. Residues 642–662 form a helical membrane-spanning segment; that stretch reads IFSICVMLIGSLMYASIFGNV. Over 663 to 1195 the chain is Cytoplasmic; it reads SAIIQRLYSG…HVSDPGLPGK (533 aa). Residues 745–845 form a cNMP-binding domain region; it reads AFRGASKGCL…IQREDLLEVL (101 aa). Residues 870 to 915 form a disordered region; the sequence is AKSQSVNDSEGDTGKLRRRRLSFESEGEKDFSKENSANDADDSTDT. Positions 890 to 902 are enriched in basic and acidic residues; the sequence is LSFESEGEKDFSK. Phosphoserine occurs at positions 891 and 894. Residues 1027–1054 are a coiled coil; the sequence is YGEVEQRLDLLQEQLNRLESQMTTDIQA.

This sequence belongs to the potassium channel family. H (Eag) (TC 1.A.1.20) subfamily. Kv11.3/KCNH7 sub-subfamily. In terms of assembly, the potassium channel is probably composed of a homo- or heterotetrameric complex of pore-forming alpha subunits that can associate only within their subfamily.

The protein localises to the cell membrane. The enzyme catalyses K(+)(in) = K(+)(out). In terms of biological role, pore-forming (alpha) subunit of voltage-gated inwardly rectifying potassium channel. Exhibits faster activation and deactivation kinetics and slow inactivation at membrane potentials positive to 240 mV, resulting in the weakest inward rectification. The protein is Voltage-gated inwardly rectifying potassium channel KCNH7 of Mus musculus (Mouse).